Reading from the N-terminus, the 401-residue chain is S-adenosylmethionine synthase (401 aa).

Residue 135–140 participates in ATP binding; sequence GHGSGD.

The protein belongs to the AdoMet synthase 2 family. The cofactor is Mg(2+).

The enzyme catalyses L-methionine + ATP + H2O = S-adenosyl-L-methionine + phosphate + diphosphate. It participates in amino-acid biosynthesis; S-adenosyl-L-methionine biosynthesis; S-adenosyl-L-methionine from L-methionine: step 1/1. Catalyzes the formation of S-adenosylmethionine from methionine and ATP. The chain is S-adenosylmethionine synthase (mat) from Methanothermobacter thermautotrophicus (strain ATCC 29096 / DSM 1053 / JCM 10044 / NBRC 100330 / Delta H) (Methanobacterium thermoautotrophicum).